We begin with the raw amino-acid sequence, 440 residues long: Protein CapE (440 aa).

A run of 12 helical transmembrane segments spans residues 7–27, 31–51, 60–80, 102–122, 141–161, 179–199, 204–224, 249–269, 324–344, 360–380, 382–402, and 409–429; these read VILI…IGYL, IGFR…VYLL, LVYL…NIFL, FSIA…ISVF, FYYT…FYII, ELPM…FAFS, THIK…LITG, WWMI…IKVF, IFSY…GYGF, YYNG…LLLW, FTNF…SVLI, and FSFV…LLFI.

The protein resides in the cell membrane. It participates in capsule biogenesis; capsule polysaccharide biosynthesis. Functionally, required for the biosynthesis of type 1 capsular polysaccharide. In Staphylococcus aureus, this protein is Protein CapE (capE).